Consider the following 278-residue polypeptide: Putative protein-disulfide oxidoreductase RF_0032 (278 aa).

Positions 1–18 are cleaved as a signal peptide; the sequence is MRSIFIVPIFLLFLSSCS. Residues 62 to 84 are disordered; the sequence is VPANDNNQTDEVSTPPSQEQKNP. The span at 65–81 shows a compositional bias: polar residues; the sequence is NDNNQTDEVSTPPSQEQ. In terms of domain architecture, Thioredoxin spans 77–266; it reads PSQEQKNPEI…ISTAVDKALE (190 aa). Residues C119 and C122 are joined by a disulfide bond.

This sequence belongs to the thioredoxin family. DsbA subfamily.

It is found in the periplasm. In terms of biological role, may be required for disulfide bond formation in some proteins. The sequence is that of Putative protein-disulfide oxidoreductase RF_0032 from Rickettsia felis (strain ATCC VR-1525 / URRWXCal2) (Rickettsia azadi).